A 343-amino-acid polypeptide reads, in one-letter code: Allergin-1 (343 aa).

An N-terminal signal peptide occupies residues 1–19; it reads MWSHLNRLLFWSIFSSVTC. Over 20–227 the chain is Extracellular; the sequence is RKAVLDCEAM…GGDSCPFCLK (208 aa). Ig-like C2-type domains follow at residues 35–118 and 128–213; these read PSPC…RDFS and PVLN…HPVT. N-linked (GlcNAc...) asparagine glycans are attached at residues Asn-51, Asn-60, Asn-89, Asn-151, Asn-157, and Asn-182. Intrachain disulfides connect Cys-56-Cys-103 and Cys-147-Cys-196. A helical transmembrane segment spans residues 228-248; the sequence is LLLPGLLLLLVVIILILAFWV. The Cytoplasmic portion of the chain corresponds to 249–343; it reads LPKYKTRKAM…SGYVYSELNF (95 aa). 2 short sequence motifs (ITIM motif) span residues 311–316 and 336–341; these read LQYATP and YVYSEL. 2 positions are modified to phosphotyrosine: Tyr-313 and Tyr-338.

Monomer. Interacts (tyrosine-phosphorylated) with PTPN6, PTPN11 and INPP5D. N-glycosylated. As to expression, expressed in myeloid cells (dendritic cells, macrophages and neutrophils, weak expression on B-cells but not in T-cells or natural killer cells), peripheral blood basophils and mast cells (at protein level).

The protein resides in the cell membrane. Functionally, immunoglobulin-like receptor which plays an inhibitory role in degranulation of mast cells. Negatively regulates IgE-mediated mast cell activation and suppresses the type I immediate hypersensitivity reaction. This chain is Allergin-1 (MILR1), found in Homo sapiens (Human).